The sequence spans 1588 residues: Ubiquitin carboxyl-terminal hydrolase 54 (1588 aa).

Arg12 carries the omega-N-methylarginine modification. The 322-residue stretch at 31-352 folds into the USP domain; the sequence is KGLSNEPGQN…QPLLLLYADP (322 aa). Cys42 functions as the Nucleophile in the catalytic mechanism. Zn(2+) contacts are provided by His67, Cys69, Cys74, Cys77, His133, Cys145, Cys150, His153, Cys166, Cys169, Cys225, and Cys229. Residue His302 is the Proton acceptor of the active site. Basic and acidic residues-rich tracts occupy residues 380-391 and 424-434; these read DSGHLTDSECNQ and SEGETLKEKQA. Disordered regions lie at residues 380–447 and 459–519; these read DSGH…TSRL and HSRP…PTWR. The residue at position 424 (Ser424) is a Phosphoserine. Composition is skewed to polar residues over residues 436–445 and 459–471; these read RNASKSSSTS and HSRP…TNAA. A compositionally biased stretch (low complexity) spans 499–512; it reads TESTSSEARSSSSS. A phosphoserine mark is found at Ser574, Ser613, and Ser616. The span at 601 to 616 shows a compositional bias: low complexity; it reads ESGYESSERNSSSPVS. The disordered stretch occupies residues 601-620; sequence ESGYESSERNSSSPVSLDAA. Residues 678–712 adopt a coiled-coil conformation; sequence TSKSELDELQEEVARRAQEQELRKKREKELEAAKG. Disordered stretches follow at residues 801 to 839, 856 to 895, 950 to 969, 1093 to 1172, and 1525 to 1562; these read RSLQ…EQSV, DSEL…SPPG, EDNS…TTQD, TRDV…SRRR, and GSVL…SAGE. Over residues 808–825 the composition is skewed to low complexity; it reads QQQPPSQQPVQPSASLPS. Positions 878-895 are enriched in polar residues; sequence SLVSPSPAQSVSQHSPPG. Phosphoserine is present on Ser1138. Residues 1536–1547 show a composition bias toward basic and acidic residues; it reads RRIDVPPDDDGR.

The protein belongs to the peptidase C19 family.

It carries out the reaction Thiol-dependent hydrolysis of ester, thioester, amide, peptide and isopeptide bonds formed by the C-terminal Gly of ubiquitin (a 76-residue protein attached to proteins as an intracellular targeting signal).. Deubiquitinase that specifically mediates 'Lys-63'-linked deubiquitination of substrates with a polyubiquitin chain composed of at least 3 ubiquitins. Specifically recognizes ubiquitin chain in position S2 and catalyzes cleavage of polyubiquitin within 'Lys-63'-linked chains. Not able to deubiquitinate substrates with shorter ubiquitin chains. Mediates deubiquitination of PLK4, maintaining PLK4 stability by reducing its ubiquitination-mediated degradation. The polypeptide is Ubiquitin carboxyl-terminal hydrolase 54 (Usp54) (Rattus norvegicus (Rat)).